Here is a 122-residue protein sequence, read N- to C-terminus: Large ribosomal subunit protein uL14 (122 aa).

The protein belongs to the universal ribosomal protein uL14 family. Part of the 50S ribosomal subunit. Forms a cluster with proteins L3 and L19. In the 70S ribosome, L14 and L19 interact and together make contacts with the 16S rRNA in bridges B5 and B8.

Binds to 23S rRNA. Forms part of two intersubunit bridges in the 70S ribosome. The sequence is that of Large ribosomal subunit protein uL14 from Micrococcus luteus (strain ATCC 4698 / DSM 20030 / JCM 1464 / CCM 169 / CCUG 5858 / IAM 1056 / NBRC 3333 / NCIMB 9278 / NCTC 2665 / VKM Ac-2230) (Micrococcus lysodeikticus).